A 160-amino-acid chain; its full sequence is Nucleotide-binding protein Noc_2254 (160 aa).

It belongs to the YajQ family.

Functionally, nucleotide-binding protein. The polypeptide is Nucleotide-binding protein Noc_2254 (Nitrosococcus oceani (strain ATCC 19707 / BCRC 17464 / JCM 30415 / NCIMB 11848 / C-107)).